The sequence spans 157 residues: S-ribosylhomocysteine lyase (157 aa).

Positions 54, 58, and 124 each coordinate Fe cation.

Belongs to the LuxS family. Homodimer. The cofactor is Fe cation.

The enzyme catalyses S-(5-deoxy-D-ribos-5-yl)-L-homocysteine = (S)-4,5-dihydroxypentane-2,3-dione + L-homocysteine. Functionally, involved in the synthesis of autoinducer 2 (AI-2) which is secreted by bacteria and is used to communicate both the cell density and the metabolic potential of the environment. The regulation of gene expression in response to changes in cell density is called quorum sensing. Catalyzes the transformation of S-ribosylhomocysteine (RHC) to homocysteine (HC) and 4,5-dihydroxy-2,3-pentadione (DPD). This Lacticaseibacillus paracasei (strain ATCC 334 / BCRC 17002 / CCUG 31169 / CIP 107868 / KCTC 3260 / NRRL B-441) (Lactobacillus paracasei) protein is S-ribosylhomocysteine lyase.